Reading from the N-terminus, the 159-residue chain is Ribosomal RNA large subunit methyltransferase H (159 aa).

Residues leucine 76, glycine 108, and 127-132 (FSKMTF) contribute to the S-adenosyl-L-methionine site.

This sequence belongs to the RNA methyltransferase RlmH family. As to quaternary structure, homodimer.

It is found in the cytoplasm. It carries out the reaction pseudouridine(1915) in 23S rRNA + S-adenosyl-L-methionine = N(3)-methylpseudouridine(1915) in 23S rRNA + S-adenosyl-L-homocysteine + H(+). Specifically methylates the pseudouridine at position 1915 (m3Psi1915) in 23S rRNA. In Clostridium botulinum (strain Kyoto / Type A2), this protein is Ribosomal RNA large subunit methyltransferase H.